The primary structure comprises 390 residues: GTPase Obg (390 aa).

The Obg domain occupies 1 to 159 (MKFVDEASIL…RELLLELMLL (159 aa)). Residues 127-147 (NTRFKSSVNRTPRQKTNGTPG) form a disordered region. Residues 129–145 (RFKSSVNRTPRQKTNGT) are compositionally biased toward polar residues. Residues 160 to 333 (ADVGMLGMPN…LCWDVMTFII (174 aa)) enclose the OBG-type G domain. Residues 166–173 (GMPNAGKS), 191–195 (FTTLV), 213–216 (DIPG), 283–286 (NKID), and 314–316 (SAA) each bind GTP. Mg(2+)-binding residues include S173 and T193.

It belongs to the TRAFAC class OBG-HflX-like GTPase superfamily. OBG GTPase family. In terms of assembly, monomer. It depends on Mg(2+) as a cofactor.

The protein resides in the cytoplasm. Its function is as follows. An essential GTPase which binds GTP, GDP and possibly (p)ppGpp with moderate affinity, with high nucleotide exchange rates and a fairly low GTP hydrolysis rate. Plays a role in control of the cell cycle, stress response, ribosome biogenesis and in those bacteria that undergo differentiation, in morphogenesis control. The polypeptide is GTPase Obg (Escherichia fergusonii (strain ATCC 35469 / DSM 13698 / CCUG 18766 / IAM 14443 / JCM 21226 / LMG 7866 / NBRC 102419 / NCTC 12128 / CDC 0568-73)).